Consider the following 309-residue polypeptide: S-antigen protein (309 aa).

Residues 1–23 (MNRILSVSFYLFFLYLYIYKTYG) form the signal peptide. A disordered region spans residues 52–309 (GKGNKYEDLQ…KSIMNMLILM (258 aa)). The segment covering 60-86 (LQEEGEGENDDEEHSNSEESDNDEENE) has biased composition (acidic residues). A compositionally biased stretch (basic and acidic residues) spans 93–259 (EAPKSDEAEA…DEAEARKSEA (167 aa)). A 20 X 8 AA approximate tandem repeats of A-[RL]-K-S-D-E-A-E region spans residues 97-256 (SDEAEALKSD…RKSDEAEARK (160 aa)). Tandem repeats lie at residues 257-271 (SEAG…GGPG) and 272-286 (SEAG…GGPG). Positions 257–286 (SEAGTEGPKGTGGPGSEAGTEGPKGTGGPG) are 2 X 15 AA tandem repeats of S-E-A-G-T-E-G-P-K-G-T-G-G-P-G. Gly residues predominate over residues 263–289 (GPKGTGGPGSEAGTEGPKGTGGPGSGG).

It localises to the parasitophorous vacuole. Its function is as follows. S antigens are soluble heat-stable proteins present in the sera of some infected individuals. This chain is S-antigen protein, found in Plasmodium falciparum (isolate NF7 / Ghana).